The following is a 247-amino-acid chain: Cell division protein ZapD (247 aa).

Belongs to the ZapD family. As to quaternary structure, interacts with FtsZ.

It localises to the cytoplasm. Functionally, cell division factor that enhances FtsZ-ring assembly. Directly interacts with FtsZ and promotes bundling of FtsZ protofilaments, with a reduction in FtsZ GTPase activity. This chain is Cell division protein ZapD, found in Klebsiella pneumoniae (strain 342).